We begin with the raw amino-acid sequence, 449 residues long: Maltose-6'-phosphate glucosidase (449 aa).

6–72 (FSIVIAGGGS…PDIEFAATTD (67 aa)) is an NAD(+) binding site. Substrate is bound by residues R95 and N149. C171 serves as a coordination point for Mn(2+). The Proton donor role is filled by D172. Position 202 (H202) interacts with Mn(2+). The active-site Proton acceptor is the Y265. Residue R285 coordinates substrate.

It belongs to the glycosyl hydrolase 4 family. Homotetramer. Mn(2+) serves as cofactor. Fe(2+) is required as a cofactor. Requires Co(2+) as cofactor. It depends on Ni(2+) as a cofactor. The cofactor is NAD(+).

The enzyme catalyses alpha-maltose 6'-phosphate + H2O = D-glucose 6-phosphate + D-glucose. Its activity is regulated as follows. Cellobiose-6'-phosphate and 6-phospho-beta-D-glucopyranoside are not substrates but competitive inhibitors of GlvA. In terms of biological role, hydrolyzes maltose-6'-phosphate and trehalose-6'-phosphate. Is involved in the catabolism of alpha-glycosides accumulated via a phosphoenolpyruvate-dependent maltose phosphotransferase system (PEP-PTS). Is also able to significantly catalyze the hydrolysis of both 6-phospho-alpha- and 6-phospho-beta-glucosides containing activated leaving groups such as p-nitrophenol and does so with retention and inversion, respectively, of the substrate anomeric configuration. This chain is Maltose-6'-phosphate glucosidase (glvA), found in Bacillus subtilis (strain 168).